Consider the following 104-residue polypeptide: Urease subunit beta (104 aa).

This sequence belongs to the urease beta subunit family. In terms of assembly, heterotrimer of UreA (gamma), UreB (beta) and UreC (alpha) subunits. Three heterotrimers associate to form the active enzyme.

The protein localises to the cytoplasm. It catalyses the reaction urea + 2 H2O + H(+) = hydrogencarbonate + 2 NH4(+). Its pathway is nitrogen metabolism; urea degradation; CO(2) and NH(3) from urea (urease route): step 1/1. This is Urease subunit beta from Rhodopseudomonas palustris (strain BisB18).